Consider the following 313-residue polypeptide: Porphobilinogen deaminase (313 aa).

An S-(dipyrrolylmethanemethyl)cysteine modification is found at Cys242.

Belongs to the HMBS family. Monomer. Dipyrromethane serves as cofactor.

It carries out the reaction 4 porphobilinogen + H2O = hydroxymethylbilane + 4 NH4(+). It participates in porphyrin-containing compound metabolism; protoporphyrin-IX biosynthesis; coproporphyrinogen-III from 5-aminolevulinate: step 2/4. Its function is as follows. Tetrapolymerization of the monopyrrole PBG into the hydroxymethylbilane pre-uroporphyrinogen in several discrete steps. This is Porphobilinogen deaminase from Photorhabdus laumondii subsp. laumondii (strain DSM 15139 / CIP 105565 / TT01) (Photorhabdus luminescens subsp. laumondii).